Here is a 283-residue protein sequence, read N- to C-terminus: Pantothenate synthetase (283 aa).

30-37 contacts ATP; sequence MGYLHEGH. The active-site Proton donor is the His37. Residue Gln61 coordinates (R)-pantoate. A beta-alanine-binding site is contributed by Gln61. An ATP-binding site is contributed by 147–150; the sequence is GLKD. Gln153 lines the (R)-pantoate pocket. ATP is bound by residues Val176 and 184–187; that span reads KSSR.

It belongs to the pantothenate synthetase family. Homodimer.

Its subcellular location is the cytoplasm. It catalyses the reaction (R)-pantoate + beta-alanine + ATP = (R)-pantothenate + AMP + diphosphate + H(+). The protein operates within cofactor biosynthesis; (R)-pantothenate biosynthesis; (R)-pantothenate from (R)-pantoate and beta-alanine: step 1/1. Catalyzes the condensation of pantoate with beta-alanine in an ATP-dependent reaction via a pantoyl-adenylate intermediate. This is Pantothenate synthetase from Halalkalibacterium halodurans (strain ATCC BAA-125 / DSM 18197 / FERM 7344 / JCM 9153 / C-125) (Bacillus halodurans).